The primary structure comprises 786 residues: Endonuclease MutS2 (786 aa).

332-339 (GPNTGGKT) is an ATP binding site. Residues 711–786 (IDLRGMDSEE…GTGVTVVILK (76 aa)) form the Smr domain.

This sequence belongs to the DNA mismatch repair MutS family. MutS2 subfamily. Homodimer. Binds to stalled ribosomes, contacting rRNA.

Functionally, endonuclease that is involved in the suppression of homologous recombination and thus may have a key role in the control of bacterial genetic diversity. In terms of biological role, acts as a ribosome collision sensor, splitting the ribosome into its 2 subunits. Detects stalled/collided 70S ribosomes which it binds and splits by an ATP-hydrolysis driven conformational change. Acts upstream of the ribosome quality control system (RQC), a ribosome-associated complex that mediates the extraction of incompletely synthesized nascent chains from stalled ribosomes and their subsequent degradation. Probably generates substrates for RQC. The chain is Endonuclease MutS2 from Clostridium perfringens (strain SM101 / Type A).